Reading from the N-terminus, the 424-residue chain is Enolase (424 aa).

Q163 contributes to the (2R)-2-phosphoglycerate binding site. E205 acts as the Proton donor in catalysis. Residues D242, E285, and D312 each coordinate Mg(2+). The (2R)-2-phosphoglycerate site is built by K337, R366, S367, and K388. The Proton acceptor role is filled by K337.

It belongs to the enolase family. It depends on Mg(2+) as a cofactor.

Its subcellular location is the cytoplasm. It localises to the secreted. It is found in the cell surface. It carries out the reaction (2R)-2-phosphoglycerate = phosphoenolpyruvate + H2O. It participates in carbohydrate degradation; glycolysis; pyruvate from D-glyceraldehyde 3-phosphate: step 4/5. Functionally, catalyzes the reversible conversion of 2-phosphoglycerate (2-PG) into phosphoenolpyruvate (PEP). It is essential for the degradation of carbohydrates via glycolysis. In Dinoroseobacter shibae (strain DSM 16493 / NCIMB 14021 / DFL 12), this protein is Enolase.